The following is a 187-amino-acid chain: Orotate phosphoribosyltransferase (187 aa).

110–118 (EDVVTTGGS) contributes to the 5-phospho-alpha-D-ribose 1-diphosphate binding site. Residues threonine 114 and arginine 142 each contribute to the orotate site.

It belongs to the purine/pyrimidine phosphoribosyltransferase family. PyrE subfamily. Homodimer. It depends on Mg(2+) as a cofactor.

The catalysed reaction is orotidine 5'-phosphate + diphosphate = orotate + 5-phospho-alpha-D-ribose 1-diphosphate. It functions in the pathway pyrimidine metabolism; UMP biosynthesis via de novo pathway; UMP from orotate: step 1/2. In terms of biological role, catalyzes the transfer of a ribosyl phosphate group from 5-phosphoribose 1-diphosphate to orotate, leading to the formation of orotidine monophosphate (OMP). The protein is Orotate phosphoribosyltransferase of Thermotoga neapolitana (strain ATCC 49049 / DSM 4359 / NBRC 107923 / NS-E).